A 136-amino-acid polypeptide reads, in one-letter code: Ubiquinol-cytochrome c reductase complex assembly factor 2 (136 aa).

The N-terminal 13 residues, 1 to 13 (MAALRYRRFLKLC), are a transit peptide targeting the mitochondrion.

Interacts with UQCC1. Forms a complex, named COMB/coordinator of mitochondrial CYTB biogenesis, composed of UQCC1, UQCC2, UQCC4, UQCC5 and UQCC6; stabilizes nascent cytochrome b/MT-CYB and promotes its membrane insertion. Forms a complex, named COMA, composed of UQCC1, UQCC2 and UQCC4; activates MT-CYB translation. Forms a complex, named COMC, composed of UQCC1, UQCC2; UQCC3 and UQCC4; mediates MT-CYB hemylation and association with the first nuclear-encoded CIII subunit UQCRQ. As to expression, widely expressed with highest levels in brain, liver, kidney, heart, skeletal muscle, thymus, testis and pancreas (at protein level).

The protein resides in the mitochondrion matrix. Its subcellular location is the mitochondrion nucleoid. It is found in the mitochondrion. The protein localises to the mitochondrion intermembrane space. It localises to the mitochondrion inner membrane. Required for the assembly of the ubiquinol-cytochrome c reductase complex (mitochondrial respiratory chain complex III or cytochrome b-c1 complex). Plays a role in the modulation of respiratory chain activities such as oxygen consumption and ATP production and via its modulation of the respiratory chain activity can regulate skeletal muscle differentiation and insulin secretion by pancreatic beta-cells. Involved in cytochrome b translation and/or stability. The protein is Ubiquinol-cytochrome c reductase complex assembly factor 2 (Uqcc2) of Mus musculus (Mouse).